Here is a 432-residue protein sequence, read N- to C-terminus: Tol-Pal system protein TolB (432 aa).

The N-terminal stretch at Met1–Ala21 is a signal peptide.

It belongs to the TolB family. In terms of assembly, the Tol-Pal system is composed of five core proteins: the inner membrane proteins TolA, TolQ and TolR, the periplasmic protein TolB and the outer membrane protein Pal. They form a network linking the inner and outer membranes and the peptidoglycan layer.

Its subcellular location is the periplasm. Part of the Tol-Pal system, which plays a role in outer membrane invagination during cell division and is important for maintaining outer membrane integrity. This Pseudomonas aeruginosa (strain ATCC 15692 / DSM 22644 / CIP 104116 / JCM 14847 / LMG 12228 / 1C / PRS 101 / PAO1) protein is Tol-Pal system protein TolB.